The chain runs to 80 residues: Exodeoxyribonuclease 7 small subunit (80 aa).

This sequence belongs to the XseB family. Heterooligomer composed of large and small subunits.

It is found in the cytoplasm. The enzyme catalyses Exonucleolytic cleavage in either 5'- to 3'- or 3'- to 5'-direction to yield nucleoside 5'-phosphates.. In terms of biological role, bidirectionally degrades single-stranded DNA into large acid-insoluble oligonucleotides, which are then degraded further into small acid-soluble oligonucleotides. In Rickettsia felis (strain ATCC VR-1525 / URRWXCal2) (Rickettsia azadi), this protein is Exodeoxyribonuclease 7 small subunit.